A 162-amino-acid chain; its full sequence is Thy-1 membrane glycoprotein (162 aa).

Residues 1-19 (MNPAISVALLLSVLQVSRG) form the signal peptide. The residue at position 20 (Q20) is a Pyrrolidone carboxylic acid. The 108-residue stretch at 20–127 (QKVTSLTACL…NKSISVYRDK (108 aa)) folds into the Ig-like V-type domain. Disulfide bonds link C28/C131 and C38/C105. Residues N42, N94, and N118 are each glycosylated (N-linked (GlcNAc...) asparagine). C131 carries the GPI-anchor amidated cysteine; alternate lipid modification. The propeptide at 132–162 (GGISLLVQNTSWMLLLLLSLSLLQALDFISL) is removed in mature form.

The protein resides in the cell membrane. In terms of biological role, may play a role in cell-cell or cell-ligand interactions during synaptogenesis and other events in the brain. The sequence is that of Thy-1 membrane glycoprotein (Thy1) from Mus musculus (Mouse).